Reading from the N-terminus, the 177-residue chain is ATP synthase subunit delta, chloroplastic (177 aa).

It belongs to the ATPase delta chain family. In terms of assembly, F-type ATPases have 2 components, F(1) - the catalytic core - and F(0) - the membrane proton channel. F(1) has five subunits: alpha(3), beta(3), gamma(1), delta(1), epsilon(1). CF(0) has four main subunits: a(1), b(1), b'(1) and c(10-14). The alpha and beta chains form an alternating ring which encloses part of the gamma chain. F(1) is attached to F(0) by a central stalk formed by the gamma and epsilon chains, while a peripheral stalk is formed by the delta, b and b' chains.

It is found in the plastid. Its subcellular location is the chloroplast thylakoid membrane. In terms of biological role, f(1)F(0) ATP synthase produces ATP from ADP in the presence of a proton or sodium gradient. F-type ATPases consist of two structural domains, F(1) containing the extramembraneous catalytic core and F(0) containing the membrane proton channel, linked together by a central stalk and a peripheral stalk. During catalysis, ATP synthesis in the catalytic domain of F(1) is coupled via a rotary mechanism of the central stalk subunits to proton translocation. Functionally, this protein is part of the stalk that links CF(0) to CF(1). It either transmits conformational changes from CF(0) to CF(1) or is implicated in proton conduction. This Galdieria sulphuraria (Red alga) protein is ATP synthase subunit delta, chloroplastic.